The chain runs to 575 residues: Protein NRD1 (575 aa).

Residues 1–153 (MQQDDDFQNF…AIRSKCFAMD (153 aa)) form the CID domain. The disordered stretch occupies residues 225–282 (SHTSVGTVAPPQAHTITEYGSRRERERERERYNSRRNRSRSPPAPFSQPSTGRKDRYP). Over residues 244-257 (GSRRERERERERYN) the composition is skewed to basic and acidic residues. Phosphoserine is present on residues serine 263, serine 265, and serine 271. The RRM domain maps to 339-409 (RTLFIGGVPL…LPLRTRWGVG (71 aa)). The tract at residues 468–575 (VSSKAISQKM…NQQQQQQQQS (108 aa)) is disordered. Polar residues-rich tracts occupy residues 471-482 (KAISQKMPTDSG) and 491-501 (PNKSGSISSIS). Composition is skewed to low complexity over residues 517-527 (QYVQPMMQQPY) and 549-575 (QQQFDPTAQLNSLMNMLNQQQQQQQQS).

The protein resides in the nucleus. Its function is as follows. Plays a role in sequence-specific regulation of nuclear pre-mRNA abundance. This Saccharomyces cerevisiae (strain ATCC 204508 / S288c) (Baker's yeast) protein is Protein NRD1 (NRD1).